The following is a 450-amino-acid chain: 3-phosphoshikimate 1-carboxyvinyltransferase (450 aa).

The tract at residues 1 to 25 is disordered; sequence MSAHGDPKPMTARKGGALTGTAEVP. 3-phosphoshikimate is bound by residues K28, S29, and R33. Residue K28 participates in phosphoenolpyruvate binding. Phosphoenolpyruvate is bound by residues G101 and R129. 3-phosphoshikimate is bound by residues S174, Q176, D327, and K354. Q176 contributes to the phosphoenolpyruvate binding site. The active-site Proton acceptor is the D327. Phosphoenolpyruvate contacts are provided by R358 and R403.

Belongs to the EPSP synthase family. As to quaternary structure, monomer.

It is found in the cytoplasm. The catalysed reaction is 3-phosphoshikimate + phosphoenolpyruvate = 5-O-(1-carboxyvinyl)-3-phosphoshikimate + phosphate. Its pathway is metabolic intermediate biosynthesis; chorismate biosynthesis; chorismate from D-erythrose 4-phosphate and phosphoenolpyruvate: step 6/7. Catalyzes the transfer of the enolpyruvyl moiety of phosphoenolpyruvate (PEP) to the 5-hydroxyl of shikimate-3-phosphate (S3P) to produce enolpyruvyl shikimate-3-phosphate and inorganic phosphate. This chain is 3-phosphoshikimate 1-carboxyvinyltransferase, found in Jannaschia sp. (strain CCS1).